A 334-amino-acid polypeptide reads, in one-letter code: DNA-directed RNA polymerase subunit alpha (334 aa).

Residues 1 to 231 (MQSNTFLTPR…EQLSVFADLK (231 aa)) form an alpha N-terminal domain (alpha-NTD) region. An alpha C-terminal domain (alpha-CTD) region spans residues 245–334 (IDPVLLRPVD…GKKDTSHAAP (90 aa)).

Belongs to the RNA polymerase alpha chain family. In terms of assembly, homodimer. The RNAP catalytic core consists of 2 alpha, 1 beta, 1 beta' and 1 omega subunit. When a sigma factor is associated with the core the holoenzyme is formed, which can initiate transcription.

The enzyme catalyses RNA(n) + a ribonucleoside 5'-triphosphate = RNA(n+1) + diphosphate. DNA-dependent RNA polymerase catalyzes the transcription of DNA into RNA using the four ribonucleoside triphosphates as substrates. This Nitrosospira multiformis (strain ATCC 25196 / NCIMB 11849 / C 71) protein is DNA-directed RNA polymerase subunit alpha.